Consider the following 179-residue polypeptide: MEVLKQKYIQEVVPAMMKKFGYKNPMAVPKIEKIVVNIGVSEAVQNPGAIEAAARDLAIITGQRPIVRKARKSIANFHLRKGMPIGVKVTLRGERMYAFLYKLINLALPRVRDFSGVSPNSFDGRGNYSLGLKEQLVFPEIEYDKIDRIRGMDITIVTTAKTDEEAKELLALLGMPFKK.

It belongs to the universal ribosomal protein uL5 family. As to quaternary structure, part of the 50S ribosomal subunit; part of the 5S rRNA/L5/L18/L25 subcomplex. Contacts the 5S rRNA and the P site tRNA. Forms a bridge to the 30S subunit in the 70S ribosome.

Functionally, this is one of the proteins that bind and probably mediate the attachment of the 5S RNA into the large ribosomal subunit, where it forms part of the central protuberance. In the 70S ribosome it contacts protein S13 of the 30S subunit (bridge B1b), connecting the 2 subunits; this bridge is implicated in subunit movement. Contacts the P site tRNA; the 5S rRNA and some of its associated proteins might help stabilize positioning of ribosome-bound tRNAs. The chain is Large ribosomal subunit protein uL5 from Dictyoglomus thermophilum (strain ATCC 35947 / DSM 3960 / H-6-12).